Here is a 159-residue protein sequence, read N- to C-terminus: 3-hydroxyacyl-[acyl-carrier-protein] dehydratase FabZ (159 aa).

H58 is an active-site residue.

Belongs to the thioester dehydratase family. FabZ subfamily.

The protein localises to the cytoplasm. The enzyme catalyses a (3R)-hydroxyacyl-[ACP] = a (2E)-enoyl-[ACP] + H2O. Involved in unsaturated fatty acids biosynthesis. Catalyzes the dehydration of short chain beta-hydroxyacyl-ACPs and long chain saturated and unsaturated beta-hydroxyacyl-ACPs. The chain is 3-hydroxyacyl-[acyl-carrier-protein] dehydratase FabZ from Helicobacter pylori (strain J99 / ATCC 700824) (Campylobacter pylori J99).